The following is a 648-amino-acid chain: Acetyl-coenzyme A synthetase (648 aa).

Residues 191-194 (RGGR), Thr310, and Asn334 each bind CoA. ATP is bound by residues 386 to 388 (GEP), 410 to 415 (DTWWQT), Asp499, and Arg514. Ser522 contacts CoA. ATP is bound at residue Arg525. Residues Val536, His538, and Ile541 each coordinate Mg(2+). Arg583 contacts CoA. Residue Lys608 is modified to N6-acetyllysine.

It belongs to the ATP-dependent AMP-binding enzyme family. Requires Mg(2+) as cofactor. Acetylated. Deacetylation by the SIR2-homolog deacetylase activates the enzyme.

It carries out the reaction acetate + ATP + CoA = acetyl-CoA + AMP + diphosphate. In terms of biological role, catalyzes the conversion of acetate into acetyl-CoA (AcCoA), an essential intermediate at the junction of anabolic and catabolic pathways. AcsA undergoes a two-step reaction. In the first half reaction, AcsA combines acetate with ATP to form acetyl-adenylate (AcAMP) intermediate. In the second half reaction, it can then transfer the acetyl group from AcAMP to the sulfhydryl group of CoA, forming the product AcCoA. This Aeromonas hydrophila subsp. hydrophila (strain ATCC 7966 / DSM 30187 / BCRC 13018 / CCUG 14551 / JCM 1027 / KCTC 2358 / NCIMB 9240 / NCTC 8049) protein is Acetyl-coenzyme A synthetase.